A 567-amino-acid polypeptide reads, in one-letter code: CTD small phosphatase-like protein 2 (567 aa).

Disordered regions lie at residues 31 to 53, 100 to 150, and 280 to 361; these read QQQQ…HQCE, ASST…FSSV, and NKEN…EEFN. 3 stretches are compositionally biased toward low complexity: residues 100–118, 130–150, and 286–297; these read ASST…SPLK, SMND…FSSV, and ESNNSNSNSNSS. Positions 298–308 are enriched in polar residues; it reads PSFFHNLQQHP. Positions 309–332 are enriched in low complexity; it reads TSAATTTTTTTTTITTTSATTSII. The span at 337 to 360 shows a compositional bias: acidic residues; sequence NSDDEIDDECDDESEEEEEDEEEF. The FCP1 homology domain maps to 386–544; sequence HSSPKISLVL…LQLVPFLESL (159 aa).

The protein belongs to the CTDSPL2 family.

Its function is as follows. Probable phosphatase. The sequence is that of CTD small phosphatase-like protein 2 (ctdspl2) from Dictyostelium discoideum (Social amoeba).